The chain runs to 33 residues: Dermaseptin-4 (33 aa).

Leucine 33 is modified (leucine amide).

Expressed by the skin glands.

The protein resides in the secreted. Its function is as follows. Has antiparasitic activity against trypomastigote form of T.cruzi (IC(50)=0.25 uM) in vitro but not against L.infantum. Probably acts by permeabilizing cell membranes. In vitro, shows no cytotoxicity against macrophages. Has antibacterial activity. The protein is Dermaseptin-4 of Pithecopus nordestinus (Northeastern Brazilian leaf frog).